Here is a 170-residue protein sequence, read N- to C-terminus: Adenine phosphoribosyltransferase (170 aa).

Belongs to the purine/pyrimidine phosphoribosyltransferase family. Homodimer.

It localises to the cytoplasm. It catalyses the reaction AMP + diphosphate = 5-phospho-alpha-D-ribose 1-diphosphate + adenine. The protein operates within purine metabolism; AMP biosynthesis via salvage pathway; AMP from adenine: step 1/1. In terms of biological role, catalyzes a salvage reaction resulting in the formation of AMP, that is energically less costly than de novo synthesis. The polypeptide is Adenine phosphoribosyltransferase (Pseudothermotoga lettingae (strain ATCC BAA-301 / DSM 14385 / NBRC 107922 / TMO) (Thermotoga lettingae)).